The primary structure comprises 479 residues: 5-hydroxytryptamine receptor 2B (479 aa).

Residues 1 to 55 (MASSYKMSEQSTISEHILQKTCDHLILTDRSGLKAESAAEEMKQTAENQGNTVHW) are Extracellular-facing. A helical transmembrane segment spans residues 56–78 (AALLIFAVIIPTIGGNILVILAV). Topologically, residues 79-89 (SLEKRLQYATN) are cytoplasmic. The chain crosses the membrane as a helical span at residues 90–112 (YFLMSLAVADLLVGLFVMPIALL). Residues 113–128 (TIMFEATWPLPLALCP) are Extracellular-facing. Cysteines 127 and 206 form a disulfide. The chain crosses the membrane as a helical span at residues 129 to 150 (AWLFLDVLFSTASIMHLCAISL). Residues D134 and T139 each coordinate ergotamine. A DRY motif; important for ligand-induced conformation changes motif is present at residues 151–153 (DRY). Over 151 to 170 (DRYIAIKKPIQANQCNSRTT) the chain is Cytoplasmic. A helical membrane pass occupies residues 171 to 191 (AFVKITVVWLISIGIAIPVPI). At 192-215 (KGIEADVVNAHNITCELTKDRFGS) the chain is on the extracellular side. A glycan (N-linked (GlcNAc...) asparagine) is linked at N203. Residue L208 participates in ergotamine binding. Positions 211 to 214 (DRFG) match the [DE]RFG motif; may stabilize a conformation that preferentially activates signaling via beta-arrestin family members motif. A helical transmembrane segment spans residues 216 to 238 (FMLFGSLAAFFAPLTIMIVTYFL). The Cytoplasmic portion of the chain corresponds to 239–323 (TIHALRKKAY…TISNEQRASK (85 aa)). The chain crosses the membrane as a helical span at residues 324–344 (VLGIVFLFFLLMWCPFFITNV). Residues 345-359 (TLALCDSCNQTTLKT) are Extracellular-facing. An intrachain disulfide couples C349 to C352. N-linked (GlcNAc...) asparagine glycosylation occurs at N353. The chain crosses the membrane as a helical span at residues 360-381 (LLQIFVWVGYVSSGVNPLIYTL). The short motif at 375-379 (NPLIY) is the NPxxY motif; important for ligand-induced conformation changes and signaling element. At 382–479 (FNKTFREAFG…DKVEDQVSYI (98 aa)) the chain is on the cytoplasmic side. Residue C396 is the site of S-palmitoyl cysteine attachment. Residues 477–479 (SYI) carry the PDZ-binding motif.

The protein belongs to the G-protein coupled receptor 1 family. In terms of assembly, interacts (via C-terminus) with MPDZ. Stomach fundus.

It localises to the cell membrane. The protein resides in the synapse. It is found in the synaptosome. In terms of biological role, G-protein coupled receptor for 5-hydroxytryptamine (serotonin). Also functions as a receptor for various ergot alkaloid derivatives and psychoactive substances. Ligand binding causes a conformation change that triggers signaling via guanine nucleotide-binding proteins (G proteins) and modulates the activity of downstream effectors. HTR2B is coupled to G(q)/G(11) G alpha proteins and activates phospholipase C-beta, releasing diacylglycerol (DAG) and inositol 1,4,5-trisphosphate (IP3) second messengers that modulate the activity of phosphatidylinositol 3-kinase and promote the release of Ca(2+) ions from intracellular stores, respectively. Beta-arrestin family members inhibit signaling via G proteins and mediate activation of alternative signaling pathways. Plays a role in the regulation of dopamine and 5-hydroxytryptamine release, 5-hydroxytryptamine uptake and in the regulation of extracellular dopamine and 5-hydroxytryptamine levels, and thereby affects neural activity. May play a role in the perception of pain. Plays a role in the regulation of behavior, including impulsive behavior. Required for normal proliferation of embryonic cardiac myocytes and normal heart development. Protects cardiomyocytes against apoptosis. Plays a role in the adaptation of pulmonary arteries to chronic hypoxia. Plays a role in vasoconstriction. Required for normal osteoblast function and proliferation, and for maintaining normal bone density. Required for normal proliferation of the interstitial cells of Cajal in the intestine. The polypeptide is 5-hydroxytryptamine receptor 2B (Htr2b) (Rattus norvegicus (Rat)).